We begin with the raw amino-acid sequence, 398 residues long: Acetyl-CoA acetyltransferase erg10B, cytosolic (398 aa).

The active-site Acyl-thioester intermediate is the Cys-92. K(+) is bound at residue Tyr-187. Asn-229 and Lys-232 together coordinate CoA. Ala-249, Pro-250, and Ser-252 together coordinate K(+). Position 253 (Ser-253) interacts with CoA. A K(+)-binding site is contributed by Val-350. Residues His-354 and Cys-384 each act as proton acceptor in the active site. A chloride-binding site is contributed by Asn-385.

It belongs to the thiolase-like superfamily. Thiolase family. As to quaternary structure, homotetramer. The cofactor is K(+).

The protein localises to the cytoplasm. Its subcellular location is the cytosol. The catalysed reaction is 2 acetyl-CoA = acetoacetyl-CoA + CoA. It participates in metabolic intermediate biosynthesis; (R)-mevalonate biosynthesis; (R)-mevalonate from acetyl-CoA: step 1/3. With respect to regulation, activity is increased by monovalent cations such as K(+), Rb(+) or Cs(+). Functionally, acetyl-CoA acetyltransferase; part of the first module of ergosterol biosynthesis pathway that includes the early steps of the pathway, conserved across all eukaryotes, and which results in the formation of mevalonate from acetyl-coenzyme A (acetyl-CoA). In this module, the cytosolic acetyl-CoA acetyltransferase erg10B catalyzes the formation of acetoacetyl-CoA. The hydroxymethylglutaryl-CoA synthases AFUA_8G07210 and AFUA_3G10660 then condense acetyl-CoA with acetoacetyl-CoA to form HMG-CoA. The rate-limiting step of the early module is the reduction to mevalonate by the 3-hydroxy-3-methylglutaryl-coenzyme A (HMG-CoA) reductases hmg1 and hmg2. Mevalonate is also a precursor for the extracellular siderophore triacetylfusarinine C (TAFC). The polypeptide is Acetyl-CoA acetyltransferase erg10B, cytosolic (Aspergillus fumigatus (strain CBS 144.89 / FGSC A1163 / CEA10) (Neosartorya fumigata)).